The chain runs to 975 residues: Protein cramped (975 aa).

Disordered regions lie at residues 1–37 (MEEL…GGGA), 71–111 (QKMK…GSGK), 318–346 (AIFP…PSVA), 403–450 (PVAA…LMKM), and 809–844 (PIDR…QEPG). A compositionally biased stretch (pro residues) spans 7 to 20 (QPPPPPPLPPPPSS). The span at 86 to 98 (SEREPNKKEEKAA) shows a compositional bias: basic and acidic residues. The span at 100–111 (KTPSQLKTGSGK) shows a compositional bias: polar residues. The SANT domain maps to 109–173 (SGKTTWTNVE…HYYQTYHKIC (65 aa)). Residues 410–425 (LRTESGSEKRSPETKK) are compositionally biased toward basic and acidic residues. Residues 815–833 (GTSSGGISSSGSKPDSSMG) show a composition bias toward low complexity.

This sequence belongs to the cramped family.

The protein resides in the nucleus. Its function is as follows. Polycomb group (Pc-G) genes are needed to maintain expression patterns of the homeotic selector genes of the Antennapedia (Antp-C) and Bithorax (Bx-C) complexes, and hence for the maintenance of segmental determination. Can act as a modifier of position effect variegation (PEV). This Drosophila sechellia (Fruit fly) protein is Protein cramped (crm).